The following is a 574-amino-acid chain: Transmembrane glycoprotein NMB (574 aa).

An N-terminal signal peptide occupies residues 1–22; sequence MESLCGVLGFLLLAAGLPLQAA. The Extracellular portion of the chain corresponds to 23-502; it reads KRFRDVLGHE…DPDSPLRAVN (480 aa). N-linked (GlcNAc...) asparagine glycosylation is found at N93, N134, N200, N249, N275, N296, N300, N306, and N312. Positions 250–338 constitute a PKD domain; the sequence is LSDEIFLRDL…STPPPPSTPP (89 aa). Positions 320-353 are disordered; sequence PGPCPPPSPSTPPPPSTPPSPPPSPLPTLSTPSP. Pro residues predominate over residues 321–345; it reads GPCPPPSPSTPPPPSTPPSPPPSPL. N-linked (GlcNAc...) asparagine glycosylation is found at N463 and N471. Residues 503–523 traverse the membrane as a helical segment; the sequence is GVLISIGCLAVLVTMVTILLY. At 524–574 the chain is on the cytoplasmic side; the sequence is KKHKAYKPIGNCPRNTVKGKGLSVLLSHAKAPFFRGDQEKDPLLQDKPRTL. S546 carries the phosphoserine modification. The Cell attachment site motif lies at 558 to 560; that stretch reads RGD.

This sequence belongs to the PMEL/NMB family. May be up-regulated in bone metastatic breast cancer cells.

It localises to the cell membrane. It is found in the melanosome membrane. The protein resides in the early endosome membrane. In terms of biological role, could be a melanogenic enzyme. The protein is Transmembrane glycoprotein NMB (Gpnmb) of Mus musculus (Mouse).